Consider the following 219-residue polypeptide: Holliday junction branch migration complex subunit RuvA (219 aa).

The segment at 1-66 is domain I; it reads MIEYIIGKIS…NFLFEYYGFK (66 aa). The interval 67–148 is domain II; the sequence is TLREKIFFEN…SEYNNDVNHS (82 aa). The flexible linker stretch occupies residues 149-154; it reads SINQQS. The segment at 155–219 is domain III; sequence NSYNPVPDLV…EAVTNKTTVS (65 aa).

This sequence belongs to the RuvA family. Homotetramer. Forms an RuvA(8)-RuvB(12)-Holliday junction (HJ) complex. HJ DNA is sandwiched between 2 RuvA tetramers; dsDNA enters through RuvA and exits via RuvB. An RuvB hexamer assembles on each DNA strand where it exits the tetramer. Each RuvB hexamer is contacted by two RuvA subunits (via domain III) on 2 adjacent RuvB subunits; this complex drives branch migration. In the full resolvosome a probable DNA-RuvA(4)-RuvB(12)-RuvC(2) complex forms which resolves the HJ.

The protein resides in the cytoplasm. Its function is as follows. The RuvA-RuvB-RuvC complex processes Holliday junction (HJ) DNA during genetic recombination and DNA repair, while the RuvA-RuvB complex plays an important role in the rescue of blocked DNA replication forks via replication fork reversal (RFR). RuvA specifically binds to HJ cruciform DNA, conferring on it an open structure. The RuvB hexamer acts as an ATP-dependent pump, pulling dsDNA into and through the RuvAB complex. HJ branch migration allows RuvC to scan DNA until it finds its consensus sequence, where it cleaves and resolves the cruciform DNA. This chain is Holliday junction branch migration complex subunit RuvA, found in Malacoplasma penetrans (strain HF-2) (Mycoplasma penetrans).